The following is a 154-amino-acid chain: D-aminoacyl-tRNA deacylase (154 aa).

The Gly-cisPro motif, important for rejection of L-amino acids motif lies at 137–138; it reads GP.

The protein belongs to the DTD family. As to quaternary structure, homodimer.

It localises to the cytoplasm. The enzyme catalyses glycyl-tRNA(Ala) + H2O = tRNA(Ala) + glycine + H(+). The catalysed reaction is a D-aminoacyl-tRNA + H2O = a tRNA + a D-alpha-amino acid + H(+). In terms of biological role, an aminoacyl-tRNA editing enzyme that deacylates mischarged D-aminoacyl-tRNAs. Also deacylates mischarged glycyl-tRNA(Ala), protecting cells against glycine mischarging by AlaRS. Acts via tRNA-based rather than protein-based catalysis; rejects L-amino acids rather than detecting D-amino acids in the active site. By recycling D-aminoacyl-tRNA to D-amino acids and free tRNA molecules, this enzyme counteracts the toxicity associated with the formation of D-aminoacyl-tRNA entities in vivo and helps enforce protein L-homochirality. The chain is D-aminoacyl-tRNA deacylase from Thermomicrobium roseum (strain ATCC 27502 / DSM 5159 / P-2).